We begin with the raw amino-acid sequence, 798 residues long: Putative antiporter subunit mnhA2 (798 aa).

The next 21 helical transmembrane spans lie at 1 to 21 (MSLV…LFTL), 33 to 53 (IALL…PSVM), 78 to 98 (GLSL…VYYA), 109 to 129 (LPRF…IVTA), 133 to 153 (ILMY…IVYW), 167 to 187 (FMIT…IYIV), 209 to 229 (FIPI…QFPF), 241 to 261 (TPVS…FLLF), 272 to 292 (FYIY…AVNA), 300 to 320 (AILA…VGLG), 337 to 357 (MILF…GALF), 381 to 401 (VFPI…GIPF), 431 to 451 (IITV…VYMI), 472 to 492 (PFLF…IFFI), 526 to 546 (GFNL…IMAL), 593 to 613 (ITIT…QAGF), 625 to 645 (GPIE…LTFI), 649 to 669 (LTMV…FILM), 674 to 694 (LALT…VSFS), 710 to 730 (AVKI…VFIA), and 766 to 786 (IDTL…YTLL).

This sequence belongs to the CPA3 antiporters (TC 2.A.63) subunit A family. In terms of assembly, may form a heterooligomeric complex that consists of seven subunits: mnhA2, mnhB2, mnhC2, mnhD2, mnhE2, mnhF2 and mnhG2.

It is found in the cell membrane. The polypeptide is Putative antiporter subunit mnhA2 (mnhA2) (Staphylococcus saprophyticus subsp. saprophyticus (strain ATCC 15305 / DSM 20229 / NCIMB 8711 / NCTC 7292 / S-41)).